A 178-amino-acid chain; its full sequence is Crossover junction endodeoxyribonuclease RuvC (178 aa).

Catalysis depends on residues aspartate 21, glutamate 81, and histidine 154. Mg(2+) is bound by residues aspartate 21, glutamate 81, and histidine 154.

The protein belongs to the RuvC family. As to quaternary structure, homodimer which binds Holliday junction (HJ) DNA. The HJ becomes 2-fold symmetrical on binding to RuvC with unstacked arms; it has a different conformation from HJ DNA in complex with RuvA. In the full resolvosome a probable DNA-RuvA(4)-RuvB(12)-RuvC(2) complex forms which resolves the HJ. Requires Mg(2+) as cofactor.

It is found in the cytoplasm. It catalyses the reaction Endonucleolytic cleavage at a junction such as a reciprocal single-stranded crossover between two homologous DNA duplexes (Holliday junction).. The RuvA-RuvB-RuvC complex processes Holliday junction (HJ) DNA during genetic recombination and DNA repair. Endonuclease that resolves HJ intermediates. Cleaves cruciform DNA by making single-stranded nicks across the HJ at symmetrical positions within the homologous arms, yielding a 5'-phosphate and a 3'-hydroxyl group; requires a central core of homology in the junction. The consensus cleavage sequence is 5'-(A/T)TT(C/G)-3'. Cleavage occurs on the 3'-side of the TT dinucleotide at the point of strand exchange. HJ branch migration catalyzed by RuvA-RuvB allows RuvC to scan DNA until it finds its consensus sequence, where it cleaves and resolves the cruciform DNA. This chain is Crossover junction endodeoxyribonuclease RuvC, found in Treponema denticola (strain ATCC 35405 / DSM 14222 / CIP 103919 / JCM 8153 / KCTC 15104).